Here is an 828-residue protein sequence, read N- to C-terminus: Chitin synthase 7 (828 aa).

6 helical membrane-spanning segments follow: residues 17 to 37, 57 to 77, 95 to 115, 444 to 464, 473 to 493, and 501 to 521; these read VIVGLVMLAAVLEWFLWVAAF, AVVVAILFVGFRAVFLPIMVV, VGLQWFAFWAFAGLLTIPWLF, FMQNTIRTTALLFFIMVLAIL, LPVGFIAISLGLNWLMMIYFG, and IWLYPLMFVLNPFFNWWYMVY. N-linked (GlcNAc...) asparagine glycosylation occurs at N615. Composition is skewed to low complexity over residues 740-752 and 813-822; these read SLVSLGSSASNSN and SNNDPNNSNS. Disordered stretches follow at residues 740–780 and 793–828; these read SLVS…LGRA and LEIGTSHGSSANRPALSRQASNNDPNNSNSGGHQQR. N818 is a glycosylation site (N-linked (GlcNAc...) asparagine).

Belongs to the chitin synthase family. Class VII subfamily.

It localises to the membrane. The catalysed reaction is [(1-&gt;4)-N-acetyl-beta-D-glucosaminyl](n) + UDP-N-acetyl-alpha-D-glucosamine = [(1-&gt;4)-N-acetyl-beta-D-glucosaminyl](n+1) + UDP + H(+). Polymerizes chitin, a structural polymer of the cell wall and septum, by transferring the sugar moiety of UDP-GlcNAc to the non-reducing end of the growing chitin polymer. Required for normal appressorial chitin content and for the normal formation and function of these infection structures. The sequence is that of Chitin synthase 7 from Pyricularia oryzae (strain 70-15 / ATCC MYA-4617 / FGSC 8958) (Rice blast fungus).